The primary structure comprises 182 residues: Vacuolar protein sorting-associated protein 29 (182 aa).

D8, H10, and N39 together coordinate Zn(2+). At K50 the chain carries N6-acetyllysine. Zn(2+)-binding residues include D62, H86, H115, and H117.

This sequence belongs to the VPS29 family. In terms of assembly, component of the commander complex consisting of the CCC subcomplex and the retriever subcomplex. Component of the heterotrimeric retriever complex formed by VPS26C, VPS29 and VPS35L; within the complex interacts with VPS35L. Component of the heterotrimeric retromer cargo-selective complex (CSC), also described as vacuolar protein sorting subcomplex (VPS), formed by VPS26 (VPS26A or VPS26B), VPS29 and VPS35. The CSC has a highly elongated structure with VPS26 and VPS29 binding independently at opposite distal ends of VPS35 as central platform. The CSC is believed to associate with variable sorting nexins to form functionally distinct retromer complex variants. The originally described retromer complex (also called SNX-BAR retromer) is a pentamer containing the CSC and a heterodimeric membrane-deforming subcomplex formed between SNX1 or SNX2 and SNX5 or SNX6 (also called SNX-BAR subcomplex); the respective CSC and SNX-BAR subcomplexes associate with low affinity. The CSC associates with SNX3 to form a SNX3-retromer complex. The CSC associates with SNX27, the WASH complex and the SNX-BAR subcomplex to form the SNX27-retromer complex. Interacts with VPS26A, VPS35, SNX1, SNX2, SNX3, SNX27, WASHC5. Interacts with TBC1D5; this interaction is blocked by VPS35L in the retriever complex. Interacts with SNX17; the interaction is indirect; SNX17 (via its C-terminus) interacts with the retriever complex (via VPS26C and VPS35L). Interacts with VPS26B and ANKRD27. (Microbial infection) Interacts with human papillomavirus 16 minor capsid protein L2 (via C-terminus); this interaction mediates the transport of the capsid from the early endosome to the Golgi apparatus. Ubiquitous. Highly expressed in heart, lung, placenta, spleen, peripheral blood leukocytes, thymus, colon skeletal muscle, kidney and brain.

The protein resides in the cytoplasm. It is found in the membrane. It localises to the endosome membrane. The protein localises to the early endosome. Its subcellular location is the late endosome. Functionally, component of the commander complex that is essential for endosomal recycling of transmembrane cargos; the commander complex is composed of the CCC subcomplex and the retriever subcomplex. Component of the retriever complex, which is a heterotrimeric complex related to retromer cargo-selective complex (CSC) and essential for retromer-independent retrieval and recycling of numerous cargos such as integrin alpha-5/beta-1 (ITGA5:ITGB1). Component of the retromer cargo-selective complex (CSC). The CSC is believed to be the core functional component of retromer or respective retromer complex variants acting to prevent missorting of selected transmembrane cargo proteins into the lysosomal degradation pathway. The recruitment of the CSC to the endosomal membrane involves RAB7A and SNX3. The SNX-BAR retromer mediates retrograde transport of cargo proteins from endosomes to the trans-Golgi network (TGN) and is involved in endosome-to-plasma membrane transport for cargo protein recycling. The SNX3-retromer mediates the retrograde endosome-to-TGN transport of WLS distinct from the SNX-BAR retromer pathway. The SNX27-retromer is believed to be involved in endosome-to-plasma membrane trafficking and recycling of a broad spectrum of cargo proteins. The CSC seems to act as recruitment hub for other proteins, such as the WASH complex and TBC1D5. Required to regulate transcytosis of the polymeric immunoglobulin receptor (pIgR-pIgA). In the endosomes, retriever complex drives the retrieval and recycling of NxxY-motif-containing cargo proteins by coupling to SNX17, a cargo essential for the homeostatic maintenance of numerous cell surface proteins associated with processes that include cell migration, cell adhesion, nutrient supply and cell signaling. The recruitment of the retriever complex to the endosomal membrane involves CCC and WASH complexes. Involved in GLUT1 endosome-to-plasma membrane trafficking; the function is dependent of association with ANKRD27. Its function is as follows. (Microbial infection) The heterotrimeric retromer cargo-selective complex (CSC) mediates the exit of human papillomavirus from the early endosome and the delivery to the Golgi apparatus. This chain is Vacuolar protein sorting-associated protein 29, found in Homo sapiens (Human).